The following is a 279-amino-acid chain: Beta-porphyranase E (279 aa).

An N-terminal signal peptide occupies residues 1 to 18 (MGNTMLLTLLLVVVAAYG). A GH16 domain is found at 19 to 277 (QTPPPPEGFR…WVRSYTLLPV (259 aa)). The substrate site is built by tryptophan 56, arginine 60, glutamate 141, glutamate 146, and glutamate 243. The active-site Nucleophile is glutamate 141. Residue glutamate 146 is the Proton donor of the active site.

It belongs to the glycosyl hydrolase 16 family.

The protein localises to the periplasm. It catalyses the reaction Hydrolysis of beta-D-galactopyranose-(1-&gt;4)-alpha-L-galactopyranose-6-sulfate linkages in porphyran.. In terms of biological role, cleaves the sulfated polysaccharide porphyran at the (1-&gt;4) linkages between beta-D-galactopyranose and alpha-L-galactopyranose-6-sulfate, forming mostly the disaccharide alpha-L-galactopyranose-6-sulfate-(1-&gt;3)-beta-D-galactose. This chain is Beta-porphyranase E (porE), found in Zobellia galactanivorans (strain DSM 12802 / CCUG 47099 / CIP 106680 / NCIMB 13871 / Dsij).